The following is a 366-amino-acid chain: Cyanide hydratase (366 aa).

Residues 6–285 (YKAAAVTSEP…DGLMFVDIDL (280 aa)) form the CN hydrolase domain. Catalysis depends on Glu-46, which acts as the Proton acceptor. Lys-128 is a catalytic residue. Cys-163 serves as the catalytic Nucleophile.

The protein belongs to the carbon-nitrogen hydrolase superfamily. Nitrilase family. Oligomer of dimers, forming left-handed helical fibers.

It catalyses the reaction formamide = hydrogen cyanide + H2O. In terms of biological role, catalyzes the hydration of cyanide to formamide. Degradation of cyanide may be important for plant pathogenic fungi in infection of cyanogenic plants. Can also transform some nitriles like 2-cyanopyridine and fumaronitrile. This Pyrenophora teres f. teres (strain 0-1) (Barley net blotch fungus) protein is Cyanide hydratase.